The following is a 100-amino-acid chain: Small ribosomal subunit protein uS14m (100 aa).

The protein belongs to the universal ribosomal protein uS14 family.

The protein localises to the mitochondrion. The polypeptide is Small ribosomal subunit protein uS14m (RPS14) (Brassica napus (Rape)).